The primary structure comprises 243 residues: Probable transcriptional regulatory protein LSEI_1022 (243 aa).

Residues Met1–Lys23 form a disordered region.

This sequence belongs to the TACO1 family.

It localises to the cytoplasm. This is Probable transcriptional regulatory protein LSEI_1022 from Lacticaseibacillus paracasei (strain ATCC 334 / BCRC 17002 / CCUG 31169 / CIP 107868 / KCTC 3260 / NRRL B-441) (Lactobacillus paracasei).